The chain runs to 138 residues: Large ribosomal subunit protein uL16 (138 aa).

Belongs to the universal ribosomal protein uL16 family. In terms of assembly, part of the 50S ribosomal subunit.

Its function is as follows. Binds 23S rRNA and is also seen to make contacts with the A and possibly P site tRNAs. The polypeptide is Large ribosomal subunit protein uL16 (Chlamydia muridarum (strain MoPn / Nigg)).